Consider the following 421-residue polypeptide: MFDKTQTIAAFDPEIWASIQNEGRRQEEHIELIASENYTSPLVMAAQGTKLTNKYAEGYPGKRYYGGCEYVDQSEALAIERAKQLFGADYANVQPHSGSQANTAVYAALCAPGDTVLGMSLAHGGHLTHGAKVNFSGKIYNAVQYGLNPETGLVDYDEVERLALEHKPKMIVAGFSAYSQVLDWQRFRDIADKVGAYLMVDMAHVAGLVAAGLYPNPVQIADVTTSTTHKTLRGPRGGIILAKANEEIEKKLNSAVFPGGQGGPLMHVIAAKAISFKEAMTPEYKDYQQQVVKNAKAMAATFIERGIKIVSGGTENHLMLVDLIGKPYSGKDADEALGKAHITVNKNAVPNDPRSPFVTSGIRVGTPAITTRGFKEAECIQLTNWICDIFAALEAGNADAVIEQVKTRVASLCKEFPVYAD.

(6S)-5,6,7,8-tetrahydrofolate-binding positions include L121 and G125–L127. An N6-(pyridoxal phosphate)lysine modification is found at K230. S355–F357 is a (6S)-5,6,7,8-tetrahydrofolate binding site.

Belongs to the SHMT family. In terms of assembly, homodimer. It depends on pyridoxal 5'-phosphate as a cofactor.

Its subcellular location is the cytoplasm. It carries out the reaction (6R)-5,10-methylene-5,6,7,8-tetrahydrofolate + glycine + H2O = (6S)-5,6,7,8-tetrahydrofolate + L-serine. The protein operates within one-carbon metabolism; tetrahydrofolate interconversion. It functions in the pathway amino-acid biosynthesis; glycine biosynthesis; glycine from L-serine: step 1/1. In terms of biological role, catalyzes the reversible interconversion of serine and glycine with tetrahydrofolate (THF) serving as the one-carbon carrier. This reaction serves as the major source of one-carbon groups required for the biosynthesis of purines, thymidylate, methionine, and other important biomolecules. Also exhibits THF-independent aldolase activity toward beta-hydroxyamino acids, producing glycine and aldehydes, via a retro-aldol mechanism. The chain is Serine hydroxymethyltransferase from Cellvibrio japonicus (strain Ueda107) (Pseudomonas fluorescens subsp. cellulosa).